Reading from the N-terminus, the 393-residue chain is S-adenosylmethionine synthase (393 aa).

H17 contacts ATP. D19 serves as a coordination point for Mg(2+). Residue E45 coordinates K(+). Positions 58 and 106 each coordinate L-methionine. The tract at residues 106–116 is flexible loop; it reads QSAHIAQGVDA. Residues 171-173, 237-238, D246, 252-253, A269, and K273 each bind ATP; these read DAK, KF, and RK. D246 serves as a coordination point for L-methionine. Residue K277 participates in L-methionine binding.

The protein belongs to the AdoMet synthase family. As to quaternary structure, homotetramer; dimer of dimers. It depends on Mg(2+) as a cofactor. Requires K(+) as cofactor.

Its subcellular location is the cytoplasm. The catalysed reaction is L-methionine + ATP + H2O = S-adenosyl-L-methionine + phosphate + diphosphate. It functions in the pathway amino-acid biosynthesis; S-adenosyl-L-methionine biosynthesis; S-adenosyl-L-methionine from L-methionine: step 1/1. Catalyzes the formation of S-adenosylmethionine (AdoMet) from methionine and ATP. The overall synthetic reaction is composed of two sequential steps, AdoMet formation and the subsequent tripolyphosphate hydrolysis which occurs prior to release of AdoMet from the enzyme. The sequence is that of S-adenosylmethionine synthase from Ruegeria sp. (strain TM1040) (Silicibacter sp.).